A 398-amino-acid chain; its full sequence is Putative glutamate--cysteine ligase 2 (398 aa).

The protein belongs to the glutamate--cysteine ligase type 2 family. YbdK subfamily.

The catalysed reaction is L-cysteine + L-glutamate + ATP = gamma-L-glutamyl-L-cysteine + ADP + phosphate + H(+). In terms of biological role, ATP-dependent carboxylate-amine ligase which exhibits weak glutamate--cysteine ligase activity. The protein is Putative glutamate--cysteine ligase 2 of Micrococcus luteus (strain ATCC 4698 / DSM 20030 / JCM 1464 / CCM 169 / CCUG 5858 / IAM 1056 / NBRC 3333 / NCIMB 9278 / NCTC 2665 / VKM Ac-2230) (Micrococcus lysodeikticus).